We begin with the raw amino-acid sequence, 363 residues long: Phosphoserine aminotransferase (363 aa).

Arginine 46 provides a ligand contact to L-glutamate. Pyridoxal 5'-phosphate contacts are provided by residues alanine 80 to threonine 81, tryptophan 106, threonine 156, aspartate 176, and glutamine 199. Position 200 is an N6-(pyridoxal phosphate)lysine (lysine 200). A pyridoxal 5'-phosphate-binding site is contributed by asparagine 241 to threonine 242.

The protein belongs to the class-V pyridoxal-phosphate-dependent aminotransferase family. SerC subfamily. As to quaternary structure, homodimer. Pyridoxal 5'-phosphate is required as a cofactor.

The protein localises to the cytoplasm. The catalysed reaction is O-phospho-L-serine + 2-oxoglutarate = 3-phosphooxypyruvate + L-glutamate. It carries out the reaction 4-(phosphooxy)-L-threonine + 2-oxoglutarate = (R)-3-hydroxy-2-oxo-4-phosphooxybutanoate + L-glutamate. It participates in amino-acid biosynthesis; L-serine biosynthesis; L-serine from 3-phospho-D-glycerate: step 2/3. The protein operates within cofactor biosynthesis; pyridoxine 5'-phosphate biosynthesis; pyridoxine 5'-phosphate from D-erythrose 4-phosphate: step 3/5. Its function is as follows. Catalyzes the reversible conversion of 3-phosphohydroxypyruvate to phosphoserine and of 3-hydroxy-2-oxo-4-phosphonooxybutanoate to phosphohydroxythreonine. The chain is Phosphoserine aminotransferase from Leptospira interrogans serogroup Icterohaemorrhagiae serovar copenhageni (strain Fiocruz L1-130).